The primary structure comprises 159 residues: SsrA-binding protein (159 aa).

The tract at residues 137–159 (KRQTEKERDWEREKQRLFQRDQR) is disordered.

The protein belongs to the SmpB family.

The protein localises to the cytoplasm. Functionally, required for rescue of stalled ribosomes mediated by trans-translation. Binds to transfer-messenger RNA (tmRNA), required for stable association of tmRNA with ribosomes. tmRNA and SmpB together mimic tRNA shape, replacing the anticodon stem-loop with SmpB. tmRNA is encoded by the ssrA gene; the 2 termini fold to resemble tRNA(Ala) and it encodes a 'tag peptide', a short internal open reading frame. During trans-translation Ala-aminoacylated tmRNA acts like a tRNA, entering the A-site of stalled ribosomes, displacing the stalled mRNA. The ribosome then switches to translate the ORF on the tmRNA; the nascent peptide is terminated with the 'tag peptide' encoded by the tmRNA and targeted for degradation. The ribosome is freed to recommence translation, which seems to be the essential function of trans-translation. The protein is SsrA-binding protein of Cellvibrio japonicus (strain Ueda107) (Pseudomonas fluorescens subsp. cellulosa).